The sequence spans 67 residues: Small ribosomal subunit protein bS21 (67 aa).

Belongs to the bacterial ribosomal protein bS21 family.

In Nitratidesulfovibrio vulgaris (strain DSM 19637 / Miyazaki F) (Desulfovibrio vulgaris), this protein is Small ribosomal subunit protein bS21.